The primary structure comprises 151 residues: Small ribosomal subunit protein uS15 (151 aa).

Belongs to the universal ribosomal protein uS15 family.

The polypeptide is Small ribosomal subunit protein uS15 (RPS13) (Ciona intestinalis (Transparent sea squirt)).